A 459-amino-acid chain; its full sequence is Inositol-trisphosphate 3-kinase A (459 aa).

A disordered region spans residues 1-26 (MTLPGHPTGMARPRGAGPCSPGLERA). 3 positions are modified to omega-N-methylarginine: arginine 35, arginine 55, and arginine 62. The interval 49-164 (AAAGEPRARG…TSEDVGQKSH (116 aa)) is disordered. Residues 116-132 (RRLSTSSLSSTGSSSLL) are compositionally biased toward low complexity. Serine 135 and serine 195 each carry phosphoserine. ATP is bound by residues serine 195, lysine 207, 247–249 (QDL), and aspartate 260. Substrate contacts are provided by lysine 262 and arginine 283. Positions 285 to 293 (DMYKKMLAV) are calmodulin-binding. 310-317 (KPRYMQWR) is a binding site for substrate. Lysine 334 and aspartate 414 together coordinate ATP. Lysine 417 is a substrate binding site.

This sequence belongs to the inositol phosphokinase (IPK) family.

The protein localises to the cytoplasm. Its subcellular location is the cytoskeleton. It carries out the reaction 1D-myo-inositol 1,4,5-trisphosphate + ATP = 1D-myo-inositol 1,3,4,5-tetrakisphosphate + ADP + H(+). Its activity is regulated as follows. Activated by calcium/calmodulin. In terms of biological role, catalyzes the phosphorylation of 1D-myo-inositol 1,4,5-trisphosphate (InsP3) into 1D-myo-inositol 1,3,4,5-tetrakisphosphate and participates to the regulation of calcium homeostasis. This Rattus norvegicus (Rat) protein is Inositol-trisphosphate 3-kinase A.